Consider the following 324-residue polypeptide: NADH-cytochrome b5 reductase 1 (324 aa).

Residues 49-69 (LNIVLAFVVGLIGSVVVLLYF) traverse the membrane as a helical segment. Residues 81-184 (TQWQQYRLME…KGPKGQMRYA (104 aa)) form the FAD-binding FR-type domain. FAD-binding positions include 164–179 (GSMK…GPKG) and 190–222 (HIGM…QIDF).

Belongs to the flavoprotein pyridine nucleotide cytochrome reductase family. In terms of assembly, monomer. Component of the 2-(3-amino-3-carboxypropyl)histidine synthase complex composed of DPH1, DPH2, DPH3 and a NADH-dependent reductase, predominantly CBR1. FAD is required as a cofactor.

It is found in the mitochondrion outer membrane. It carries out the reaction 2 Fe(III)-[cytochrome b5] + NADH = 2 Fe(II)-[cytochrome b5] + NAD(+) + H(+). It catalyses the reaction 2 Fe(3+)-[Dph3] + NADH = 2 Fe(2+)-[Dph3] + NAD(+) + H(+). Its pathway is protein modification; peptidyl-diphthamide biosynthesis. Its function is as follows. NADH-dependent reductase for DPH3 and cytochrome b5. Required for the first step of diphthamide biosynthesis, a post-translational modification of histidine which occurs in elongation factor 2. DPH1 and DPH2 transfer a 3-amino-3-carboxypropyl (ACP) group from S-adenosyl-L-methionine (SAM) to a histidine residue, the reaction is assisted by a reduction system comprising DPH3 and a NADH-dependent reductase, predominantly CBR1. By reducing DPH3, also involved in the formation of the tRNA wobble base modification mcm5s 2U (5-methoxycarbonylmethyl-2-thiouridine), mediated by the elongator complex. The cytochrome b5/NADH cytochrome b5 reductase electron transfer system supports the catalytic activity of several sterol biosynthetic enzymes. This chain is NADH-cytochrome b5 reductase 1 (CBR1), found in Mycosarcoma maydis (Corn smut fungus).